We begin with the raw amino-acid sequence, 203 residues long: Thymidylate kinase (203 aa).

9 to 16 is a binding site for ATP; the sequence is GPEGAGKT.

Belongs to the thymidylate kinase family.

It catalyses the reaction dTMP + ATP = dTDP + ADP. Functionally, phosphorylation of dTMP to form dTDP in both de novo and salvage pathways of dTTP synthesis. In Staphylococcus epidermidis (strain ATCC 35984 / DSM 28319 / BCRC 17069 / CCUG 31568 / BM 3577 / RP62A), this protein is Thymidylate kinase.